Consider the following 128-residue polypeptide: Small ribosomal subunit protein uS11 (128 aa).

This sequence belongs to the universal ribosomal protein uS11 family. As to quaternary structure, part of the 30S ribosomal subunit. Interacts with proteins S7 and S18. Binds to IF-3.

Located on the platform of the 30S subunit, it bridges several disparate RNA helices of the 16S rRNA. Forms part of the Shine-Dalgarno cleft in the 70S ribosome. In Porphyromonas gingivalis (strain ATCC BAA-308 / W83), this protein is Small ribosomal subunit protein uS11.